The chain runs to 1019 residues: Insulin-degrading enzyme (1019 aa).

Zn(2+) is bound at residue histidine 108. Residue glutamate 111 is the Proton acceptor of the active site. The Zn(2+) site is built by histidine 112 and glutamate 189. An N6-succinyllysine modification is found at lysine 192. Position 359–363 (359–363 (LVGGQ)) interacts with substrate. An ATP-binding site is contributed by arginine 429. Position 697 is an N6-succinyllysine (lysine 697). The SlyX motif signature appears at 853–858 (EKPPHY). Residue 895 to 901 (DKPKKLS) participates in ATP binding.

It belongs to the peptidase M16 family. In terms of assembly, homodimer. Can also form homotetramers. The cofactor is Zn(2+). Detected in brain and liver (at protein level). Detected in liver.

It is found in the cytoplasm. The protein localises to the cytosol. It localises to the cell membrane. The protein resides in the secreted. It carries out the reaction Degradation of insulin, glucagon and other polypeptides. No action on proteins.. Its activity is regulated as follows. Activated by ATP, other nucleotide triphosphates and small peptides. Inhibited by bacitracin. In terms of biological role, plays a role in the cellular breakdown of insulin, APP peptides, IAPP peptides, natriuretic peptides, glucagon, bradykinin, kallidin, and other peptides, and thereby plays a role in intercellular peptide signaling. Substrate binding induces important conformation changes, making it possible to bind and degrade larger substrates, such as insulin. Contributes to the regulation of peptide hormone signaling cascades and regulation of blood glucose homeostasis via its role in the degradation of insulin, glucagon and IAPP. Plays a role in the degradation and clearance of APP-derived amyloidogenic peptides that are secreted by neurons and microglia. Degrades the natriuretic peptides ANP, BNP and CNP, inactivating their ability to raise intracellular cGMP. Also degrades an aberrant frameshifted 40-residue form of NPPA (fsNPPA) which is associated with familial atrial fibrillation in heterozygous patients. Involved in antigen processing. Produces both the N terminus and the C terminus of MAGEA3-derived antigenic peptide (EVDPIGHLY) that is presented to cytotoxic T lymphocytes by MHC class I. The chain is Insulin-degrading enzyme (Ide) from Mus musculus (Mouse).